Here is a 318-residue protein sequence, read N- to C-terminus: Protease HtpX homolog (318 aa).

2 helical membrane passes run 6 to 26 (TAML…LIGG) and 28 to 48 (AGMM…YWNS). Residue His130 participates in Zn(2+) binding. The active site involves Glu131. His134 contacts Zn(2+). 2 consecutive transmembrane segments (helical) span residues 145–165 (ITAT…FFGG) and 173–193 (PLGF…AMLV). Position 202 (Glu202) interacts with Zn(2+). A disordered region spans residues 284 to 318 (NVSTGPVRAVNPTRKSRSVPNTGRGGSQPPRGPWS).

This sequence belongs to the peptidase M48B family. Requires Zn(2+) as cofactor.

It localises to the cell inner membrane. In Rhizobium etli (strain CIAT 652), this protein is Protease HtpX homolog.